The following is a 242-amino-acid chain: Orotidine 5'-phosphate decarboxylase (242 aa).

Substrate contacts are provided by residues Asp22, Lys44, 71-80 (DLKYHDIPNT), Thr130, Arg190, Gln199, Gly219, and Arg220. The active-site Proton donor is the Lys73.

This sequence belongs to the OMP decarboxylase family. Type 1 subfamily. As to quaternary structure, homodimer.

It carries out the reaction orotidine 5'-phosphate + H(+) = UMP + CO2. It functions in the pathway pyrimidine metabolism; UMP biosynthesis via de novo pathway; UMP from orotate: step 2/2. Its function is as follows. Catalyzes the decarboxylation of orotidine 5'-monophosphate (OMP) to uridine 5'-monophosphate (UMP). The polypeptide is Orotidine 5'-phosphate decarboxylase (Laribacter hongkongensis (strain HLHK9)).